A 1452-amino-acid polypeptide reads, in one-letter code: Arf-GAP with Rho-GAP domain, ANK repeat and PH domain-containing protein 1 (1452 aa).

Residues Asp-6–Pro-70 form the SAM domain. The segment at Pro-81–Arg-90 is required for interaction with SH3KBP1. 2 disordered regions span residues His-87–Arg-258 and Glu-271–Pro-304. Composition is skewed to pro residues over residues Pro-92–Thr-104, Ser-154–Pro-167, and Pro-205–Leu-225. 2 stretches are compositionally biased toward acidic residues: residues Glu-228 to Glu-239 and Glu-271 to His-286. The residue at position 232 (Ser-232) is a Phosphoserine. Residue Tyr-234 is modified to Phosphotyrosine; by PTK6. In terms of domain architecture, PH 1 spans Pro-329–Val-421. Residue Ser-430 is modified to Phosphoserine. Residues Gln-442 to Ala-531 form the PH 2 domain. Tyr-506 is modified (phosphotyrosine). Positions Ser-537–Glu-662 constitute an Arf-GAP domain. The C4-type zinc finger occupies Cys-552 to Cys-575. Ser-740 is subject to Phosphoserine. The PH 3 domain occupies Thr-745–Val-852. One can recognise a Rho-GAP domain in the interval Ala-956–Phe-1141. The Ras-associating domain maps to Gly-1174 to Ser-1263. Positions Gly-1276–His-1398 constitute a PH 4 domain. 2 positions are modified to phosphoserine: Ser-1430 and Ser-1437.

Interacts with SH3KBP1/CIN85 (via SH3 domains). The interaction is independent of EGF and does not affect ARAP1 GTPase-activating activity but is involved in regulating ubiquitination and endocytic trafficking of EGFR. ARAP1 competes with E3 ubiquitin-protein ligase CBL for binding to SH3KBP1, preventing interaction of CBL with SH3KBP1; this is likely to regulate SH3KBP1-mediated internalization of EGFR. Interacts with TNFRSF10A. Post-translationally, phosphorylated by PTK6 following EGF stimulation which enhances EGFR signaling by delaying EGFR down-regulation; the interaction is mediated by the SH2 domain of PTK6. Phosphorylation promotes association with the Golgi apparatus and endosomes. In terms of tissue distribution, expressed in the retina where it is detected in Mueller glia (at protein level). Also detected in the retinal pigment epithelium (at protein level). Expressed in osteoclasts (at protein level).

Its subcellular location is the cytoplasm. It localises to the golgi apparatus. The protein resides in the trans-Golgi network. It is found in the golgi stack membrane. The protein localises to the cell membrane. Its subcellular location is the endosome. It localises to the multivesicular body. The protein resides in the cell projection. It is found in the ruffle. The protein localises to the podosome. Its subcellular location is the early endosome. Its function is as follows. Phosphatidylinositol 3,4,5-trisphosphate-dependent GTPase-activating protein that modulates actin cytoskeleton remodeling by regulating ARF and RHO family members. Activated by phosphatidylinositol 3,4,5-trisphosphate (PtdIns(3,4,5)P3) binding and, to a lesser extent, by phosphatidylinositol 3,4-bisphosphate (PtdIns(3,4)P2) binding. Has a preference for ARF1 and ARF5. Positively regulates the ring size of circular dorsal ruffles and promotes macropinocytosis. Acts as a bridging factor in osteoclasts to control actin and membrane dynamics. Regulates the condensing of osteoclast podosomes into sealing zones which segregate the bone-facing membrane from other membrane domains and are required for osteoclast resorption activity. Also regulates recruitment of the AP-3 complex to endosomal membranes and trafficking of lysosomal membrane proteins to the ruffled membrane border of osteoclasts to modulate bone resorption. Regulates the endocytic trafficking of EGFR. Regulates the incorporation of CD63 and CD9 into multivesicular bodies. Required in the retinal pigment epithelium (RPE) for photoreceptor survival due to its role in promoting RPE phagocytosis. The sequence is that of Arf-GAP with Rho-GAP domain, ANK repeat and PH domain-containing protein 1 from Mus musculus (Mouse).